The sequence spans 686 residues: Catalase-2 (686 aa).

A compositionally biased stretch (basic and acidic residues) spans 1-27 (MSDDQNKRVNEHSKDEQLEQYRTDNSG). The segment at 1–43 (MSDDQNKRVNEHSKDEQLEQYRTDNSGKKMTTNQGLRVSEDEH) is disordered. Active-site residues include His-78 and Asn-151. Tyr-365 serves as a coordination point for heme.

The protein belongs to the catalase family. HPII subfamily. The cofactor is heme.

The catalysed reaction is 2 H2O2 = O2 + 2 H2O. Decomposes hydrogen peroxide into water and oxygen; serves to protect cells from the toxic effects of hydrogen peroxide. Involved in sporulation. This is Catalase-2 (katE) from Bacillus subtilis (strain 168).